Consider the following 37-residue polypeptide: Cytochrome b6-f complex subunit 5 (37 aa).

Residues 5–25 (LLSGIVLGLVPVTIAGLFVTA) form a helical membrane-spanning segment.

It belongs to the PetG family. The 4 large subunits of the cytochrome b6-f complex are cytochrome b6, subunit IV (17 kDa polypeptide, PetD), cytochrome f and the Rieske protein, while the 4 small subunits are PetG, PetL, PetM and PetN. The complex functions as a dimer.

It is found in the plastid. The protein resides in the chloroplast thylakoid membrane. Component of the cytochrome b6-f complex, which mediates electron transfer between photosystem II (PSII) and photosystem I (PSI), cyclic electron flow around PSI, and state transitions. PetG is required for either the stability or assembly of the cytochrome b6-f complex. The chain is Cytochrome b6-f complex subunit 5 from Chlorella vulgaris (Green alga).